Here is a 256-residue protein sequence, read N- to C-terminus: Nuclear shuttle protein (256 aa).

The short motif at 21-42 (NSLIRQQSLFKRNVSKRRPFQT) is the Bipartite nuclear localization signal element. The Nuclear localization signal motif lies at 81–96 (DIAKSLPNRTRSYIKL). Positions 150–187 (ELFGARIHSHGNLAIVPSLKDRFYIRHVLKRVISVEKD) are interaction with Arabidopsis thaliana NSI protein.

It belongs to the begomovirus nuclear shuttle protein family. In terms of assembly, binds to single-stranded and double-stranded viral DNA. Interacts with the host nuclear shuttle interacting (NSI) protein. This interaction may allow NSP to recruit NSI monomers to the viral genome and thus regulate nuclear export of viral genome by NSP.

It localises to the host nucleus. The protein localises to the host cytoplasm. Its subcellular location is the host cell membrane. Its function is as follows. Binds to the genomic viral ssDNA, shuttles it into and out of the cell nucleus. Begomoviruses use 2 proteins to transport their DNA from cell to cell. The nuclear shuttle protein (NSP) shuttles it between nucleus and cytoplasm and the movement protein (MP) probably transports the DNA-NSP complex to the cell periphery and facilitates movement across the cell wall. This is Nuclear shuttle protein from Potato yellow mosaic virus (isolate Venezuela) (PYMV).